A 582-amino-acid chain; its full sequence is ATP-dependent lipid A-core flippase (582 aa).

The next 5 membrane-spanning stretches (helical) occupy residues 27-47 (LIVA…MISL), 69-89 (LIIF…TYCL), 142-162 (ALVS…LMFY), 165-185 (WQLS…IGVV), and 249-269 (AAAN…VLYL). Positions 28–310 (IVAVIALVIN…LTNVTSQFQR (283 aa)) constitute an ABC transmembrane type-1 domain. The ABC transporter domain maps to 342-578 (VSVKDVSFTY…NGAYAQLHRI (237 aa)). 376–383 (GRSGSGKS) is an ATP binding site.

Belongs to the ABC transporter superfamily. Lipid exporter (TC 3.A.1.106) family. In terms of assembly, homodimer.

Its subcellular location is the cell inner membrane. It carries out the reaction ATP + H2O + lipid A-core oligosaccharideSide 1 = ADP + phosphate + lipid A-core oligosaccharideSide 2.. Functionally, involved in lipopolysaccharide (LPS) biosynthesis. Translocates lipid A-core from the inner to the outer leaflet of the inner membrane. Transmembrane domains (TMD) form a pore in the inner membrane and the ATP-binding domain (NBD) is responsible for energy generation. The protein is ATP-dependent lipid A-core flippase of Vibrio parahaemolyticus serotype O3:K6 (strain RIMD 2210633).